A 33-amino-acid polypeptide reads, in one-letter code: Cytochrome b6-f complex subunit 8 (33 aa).

Residues 2–22 form a helical membrane-spanning segment; that stretch reads LFTIAWASLAAVFSFSIAMVV.

The protein belongs to the PetN family. As to quaternary structure, the 4 large subunits of the cytochrome b6-f complex are cytochrome b6, subunit IV (17 kDa polypeptide, PetD), cytochrome f and the Rieske protein, while the 4 small subunits are PetG, PetL, PetM and PetN. The complex functions as a dimer.

It localises to the cellular thylakoid membrane. Functionally, component of the cytochrome b6-f complex, which mediates electron transfer between photosystem II (PSII) and photosystem I (PSI), cyclic electron flow around PSI, and state transitions. This chain is Cytochrome b6-f complex subunit 8, found in Synechococcus sp. (strain CC9311).